Consider the following 581-residue polypeptide: Pyridine nucleotide-disulfide oxidoreductase domain-containing protein 2 (581 aa).

An FAD-binding site is contributed by 38–71; sequence VVIGAGHNGLVAAAYLQRLGVNTAVFERRHVIGG.

It belongs to the carotenoid/retinoid oxidoreductase family. In terms of assembly, interacts with COX5B; this interaction may contribute to localize PYROXD2 to the inner face of the inner mitochondrial membrane.

The protein resides in the mitochondrion matrix. Functionally, probable oxidoreductase that may play a role as regulator of mitochondrial function. The chain is Pyridine nucleotide-disulfide oxidoreductase domain-containing protein 2 from Mus musculus (Mouse).